Consider the following 92-residue polypeptide: Small ribosomal subunit protein uS19 (92 aa).

It belongs to the universal ribosomal protein uS19 family.

Its function is as follows. Protein S19 forms a complex with S13 that binds strongly to the 16S ribosomal RNA. The protein is Small ribosomal subunit protein uS19 of Bacillus licheniformis (strain ATCC 14580 / DSM 13 / JCM 2505 / CCUG 7422 / NBRC 12200 / NCIMB 9375 / NCTC 10341 / NRRL NRS-1264 / Gibson 46).